Consider the following 719-residue polypeptide: Plasmin and fibronectin-binding protein A (719 aa).

The signal sequence occupies residues 1–45 (MLKIVKKLEVLMKYFVPNEVFSIRKLKVGTCSVLLAISILGSQGI). Disordered regions lie at residues 56-76 (PMATKESSNAITNDLDNSPTV) and 109-128 (IRSNSQLDNRTVESTVTSTN). PbH1 repeat units lie at residues 287 to 310 (SNNVTIKNVTFKDSYQGHAIQIAG), 362 to 384 (SENVTIQNSYFGKSDKSGELVTA), 397 to 419 (PSNIKILNNHFDNMMYAGVRFTG), 497 to 523 (VSDITVTKNVINNNSKETEQPNIELLR), and 525 to 546 (SDNLVVSENSIFGGKEGIVIED). The stretch at 601–658 (NNLSDKNEKEKNKEEKQSNSNNVIDSNQKNGEFNSSKDNRQMNDKIDNKQDNKTEEVN) forms a coiled coil. Over residues 606–617 (KNEKEKNKEEKQ) the composition is skewed to basic and acidic residues. The segment at 606–655 (KNEKEKNKEEKQSNSNNVIDSNQKNGEFNSSKDNRQMNDKIDNKQDNKTE) is disordered. Over residues 623-634 (VIDSNQKNGEFN) the composition is skewed to polar residues. Basic and acidic residues predominate over residues 635–655 (SSKDNRQMNDKIDNKQDNKTE). Residues 685 to 689 (LPKTG) carry the LPXTG sorting signal motif. A Pentaglycyl murein peptidoglycan amidated threonine modification is found at Thr688. Residues 689–719 (GSNKIMELFLTVTGIGLLLTLKGLKYYGKDK) constitute a propeptide, removed by sortase.

The protein resides in the secreted. Its subcellular location is the cell wall. In terms of biological role, acts as a fibronectin-dependent adhesin and invasin. Binds host (in this case human) fibronectin, plasmin, plasminogen, and human serum albumin. Where the bacteria adhere to human cells there is major recruitment of microvilli which seem to fuse to cover the streptococcal chains. Antibodies to this protein reduce bacterial growth in human blood. The polypeptide is Plasmin and fibronectin-binding protein A (pfbA) (Streptococcus pneumoniae (strain ATCC BAA-255 / R6)).